Here is a 1165-residue protein sequence, read N- to C-terminus: MGVNTAGDPQKSQPKINKGGIGKDESFGALFKPVYKGKKLADPVPTIEDKWQLLPAFLKVKGLVKQHLDSYNYFVDVDLKKIVQANEKVTSDVEPWFYLKYLDIRVGAPVRTDADAIQASISPHECRLRDLTYGANIYVDIEYTRGKQVVRRRNVPIGRMPVMLRSNKCVLSGKNEMEMAALNECPLDPGGYFIVKGTEKVILVQEQLSKNRIIVEAEPKKGLWQASVTSSTHERKSKTYVITKNGKLYLKHNSVADDIPIVVVLKAMGLQSDQEIFELVAGAEASYQDLFAPSIEECAKLNIYTAQQALEYIGARVKVNRRAGANRLPPHEEALEVLAAVVLAHINVFNLEFRPKAVYIGIMARRVLMAMVDPLQVDDRDYVGNKRLELAGQLLALLFEDLFKKFNSDLKLNIDKVLKKPHRTQEFDAYNQLTVHSDHITQGMVRALSTGNWSLKRFKMERAGVTHVLSRLSYISALGMMTRITSQFEKTRKVSGPRSLQASQFGMLCTSDTPEGEACGLVKNLALMTHITTDEEEEPIIKLAYAFGIEDIHVISGRELHSHGTYLVYLNGAILGISRYPSLFVASFRKLRRSGKISPFIGIFINTHQRAVFISTDGGRICRPLIIVQNGLPKVESKHIRLLKEGKWGFEDFLKQGLVEYVDVNEENDSLISVYERDITPDTTHLEIEPFTILGAVAGLIPYPHHNQSPRNTYQCAMGKQAIGAIAYNQLQRIDTLLYLMVYPQQPMVKTKTIELIGYDKLPAGQNATVAIMSYSGYDIEDALVLNKSSIDRGFGRCQVFHKHSVIVRKYPNGTHDRIGDPQRDPETGEVVWKHGVVEDDGLAGVGCRVQPGQIYVNKQTPTNALDNSITLGHTQTVESGYKATPMTYKAPEPGYIDKVMLTTTDSDQTLIKVLMRQTRRPELGDKFSSRHGQKGVCGVIVQQEDMPFNDQGICPDIIMNPHGFPSRMTVGKMIELLSGKVGVLRGTLEYGTCFGGTKVEDASRILVEHGYNYSGKDMLTSGITGETLEAYIFMGPIYYQKLKHMVMDKMHARARGPRAVLTRQPTEGRSRDGGLRLGEMERDCLIAYGASQLLLERLMISSDACDVDVCGQCGLLGYKGWCNSCQSTREVVKMTIPYAAKLLFQELLSMNIVPRLALEDEFKY.

The segment at 1-21 (MGVNTAGDPQKSQPKINKGGI) is disordered. Zn(2+) contacts are provided by C1111, C1114, C1123, and C1126. The C4-type zinc-finger motif lies at 1111-1126 (CGQCGLLGYKGWCNSC).

The protein belongs to the RNA polymerase beta chain family. As to quaternary structure, component of the RNA polymerase III (Pol III) complex consisting of 17 subunits.

It is found in the nucleus. It carries out the reaction RNA(n) + a ribonucleoside 5'-triphosphate = RNA(n+1) + diphosphate. Functionally, DNA-dependent RNA polymerase catalyzes the transcription of DNA into RNA using the four ribonucleoside triphosphates as substrates. Second largest core component of RNA polymerase III which synthesizes small RNAs, such as 5S rRNA and tRNAs. Proposed to contribute to the polymerase catalytic activity and forms the polymerase active center together with the largest subunit. Pol III is composed of mobile elements and RPC2 is part of the core element with the central large cleft and probably a clamp element that moves to open and close the cleft. The chain is DNA-directed RNA polymerase III subunit RPC2 (rpc2) from Schizosaccharomyces pombe (strain 972 / ATCC 24843) (Fission yeast).